Here is a 338-residue protein sequence, read N- to C-terminus: Methionine import ATP-binding protein MetN 1 (338 aa).

Residues 2-241 (IEVRSVTKRF…PHSELGVGLL (240 aa)) form the ABC transporter domain. 38–45 (GQSGAGKT) lines the ATP pocket.

This sequence belongs to the ABC transporter superfamily. Methionine importer (TC 3.A.1.24) family. The complex is composed of two ATP-binding proteins (MetN), two transmembrane proteins (MetI) and a solute-binding protein (MetQ).

It localises to the cell membrane. It catalyses the reaction L-methionine(out) + ATP + H2O = L-methionine(in) + ADP + phosphate + H(+). The catalysed reaction is D-methionine(out) + ATP + H2O = D-methionine(in) + ADP + phosphate + H(+). Its function is as follows. Part of the ABC transporter complex MetNIQ involved in methionine import. Responsible for energy coupling to the transport system. The sequence is that of Methionine import ATP-binding protein MetN 1 from Rhodococcus jostii (strain RHA1).